A 473-amino-acid polypeptide reads, in one-letter code: Probable acid phosphatase DDB_G0284755 (473 aa).

His-94 (nucleophile) is an active-site residue. Catalysis depends on Asp-359, which acts as the Proton donor.

It belongs to the histidine acid phosphatase family.

The enzyme catalyses a phosphate monoester + H2O = an alcohol + phosphate. This is Probable acid phosphatase DDB_G0284755 from Dictyostelium discoideum (Social amoeba).